Consider the following 182-residue polypeptide: Ribosome maturation factor RimM (182 aa).

The PRC barrel domain maps to 103–182; that stretch reads EDEFYWRELF…RIEVDWDPGF (80 aa).

This sequence belongs to the RimM family. As to quaternary structure, binds ribosomal protein uS19.

It localises to the cytoplasm. In terms of biological role, an accessory protein needed during the final step in the assembly of 30S ribosomal subunit, possibly for assembly of the head region. Essential for efficient processing of 16S rRNA. May be needed both before and after RbfA during the maturation of 16S rRNA. It has affinity for free ribosomal 30S subunits but not for 70S ribosomes. In Vibrio campbellii (strain ATCC BAA-1116), this protein is Ribosome maturation factor RimM.